A 207-amino-acid chain; its full sequence is Outer-membrane lipoprotein LolB (207 aa).

Positions 1–21 (MPMRKRHFYRLLPLASLLLAA) are cleaved as a signal peptide. A lipid anchor (N-palmitoyl cysteine) is attached at C22. C22 carries the S-diacylglycerol cysteine lipid modification.

The protein belongs to the LolB family. Monomer.

Its subcellular location is the cell outer membrane. Plays a critical role in the incorporation of lipoproteins in the outer membrane after they are released by the LolA protein. The polypeptide is Outer-membrane lipoprotein LolB (Yersinia pseudotuberculosis serotype O:1b (strain IP 31758)).